Reading from the N-terminus, the 455-residue chain is Phosphomethylpyrimidine synthase (455 aa).

Substrate contacts are provided by residues asparagine 80, methionine 109, tyrosine 139, histidine 175, 195–197 (SRG), 236–239 (DSLR), and glutamate 275. Residue histidine 279 participates in Zn(2+) binding. Tyrosine 302 contacts substrate. Histidine 343 provides a ligand contact to Zn(2+). 3 residues coordinate [4Fe-4S] cluster: cysteine 423, cysteine 426, and cysteine 431.

The protein belongs to the ThiC family. [4Fe-4S] cluster is required as a cofactor.

It carries out the reaction 5-amino-1-(5-phospho-beta-D-ribosyl)imidazole + S-adenosyl-L-methionine = 4-amino-2-methyl-5-(phosphooxymethyl)pyrimidine + CO + 5'-deoxyadenosine + formate + L-methionine + 3 H(+). Its pathway is cofactor biosynthesis; thiamine diphosphate biosynthesis. Its function is as follows. Catalyzes the synthesis of the hydroxymethylpyrimidine phosphate (HMP-P) moiety of thiamine from aminoimidazole ribotide (AIR) in a radical S-adenosyl-L-methionine (SAM)-dependent reaction. This chain is Phosphomethylpyrimidine synthase, found in Synechococcus sp. (strain JA-2-3B'a(2-13)) (Cyanobacteria bacterium Yellowstone B-Prime).